The sequence spans 205 residues: 3-demethoxyubiquinol 3-hydroxylase (205 aa).

Positions 54, 84, 87, 136, 168, and 171 each coordinate Fe cation.

It belongs to the COQ7 family. Requires Fe cation as cofactor.

It localises to the cell membrane. It carries out the reaction a 5-methoxy-2-methyl-3-(all-trans-polyprenyl)benzene-1,4-diol + AH2 + O2 = a 3-demethylubiquinol + A + H2O. It participates in cofactor biosynthesis; ubiquinone biosynthesis. Its function is as follows. Catalyzes the hydroxylation of 2-nonaprenyl-3-methyl-6-methoxy-1,4-benzoquinol during ubiquinone biosynthesis. This is 3-demethoxyubiquinol 3-hydroxylase from Paracidovorax citrulli (strain AAC00-1) (Acidovorax citrulli).